The chain runs to 179 residues: Transcription factor 21 (179 aa).

Residues 19–88 (DCDSLKVDSN…VQRNAANARE (70 aa)) are disordered. Composition is skewed to polar residues over residues 30 to 49 (EFGT…NGSP) and 70 to 80 (SGVSQEGKQVQ). The bHLH domain maps to 79–131 (VQRNAANARERARMRVLSKAFSRLKTTLPWVPPDTKLSKLDTLRLASSYIAHL).

As to quaternary structure, efficient DNA binding requires dimerization with another bHLH protein. Forms a heterodimer with TCF3 and binds the E box (5'-CANNTG-3'). In terms of tissue distribution, expressed at high levels in lung, kidney, gut, heart, ovary and podocytes (visceral glomerular epithelial cells). Also found in spleen, large intestine, uterus, bladder and testis.

It is found in the nucleus. Involved in epithelial-mesenchymal interactions in kidney and lung morphogenesis that include epithelial differentiation and branching morphogenesis. May be involved in the organogenesis of the spleen and heart and in cardiac and coronary artery development. May function in the development and sex differentiation of gonad via transcriptional regulation of AD4BP/SF-1. This is Transcription factor 21 (Tcf21) from Mus musculus (Mouse).